A 315-amino-acid chain; its full sequence is MHREPAKKKAEKRLFDASSFGKDLLAGGVAAAVSKTAVAPIERVKLLLQVQASSKQISPEARYKGMVDCLVRIPREQGFFSFWRGNLANVIRYFPTQALNFAFKDKYKQLFMSGVNKEKQFWRWFLANLASGGAAGATSLCVVYPLDFARTRLGVDIGKGPEERQFKGLGDCIMKIAKSDGIAGLYQGFGVSVQGIIVYRASYFGAYDTVKGLLPKPKKTPFLVSFFIAQVVTTCSGILSYPFDTVRRRMMMQSGEAKRQYKGTLDCFVKIYQHEGISSFFRGAFSNVLRGTGGALVLVLYDKIKEFFHIDIGGR.

The Mitochondrial intermembrane portion of the chain corresponds to 1–19; it reads MHREPAKKKAEKRLFDASS. The stretch at 18–110 is one Solcar 1 repeat; that stretch reads SSFGKDLLAG…FAFKDKYKQL (93 aa). The helical transmembrane segment at 20–49 threads the bilayer; it reads FGKDLLAGGVAAAVSKTAVAPIERVKLLLQ. The Mitochondrial matrix portion of the chain corresponds to 50-86; that stretch reads VQASSKQISPEARYKGMVDCLVRIPREQGFFSFWRGN. A helical transmembrane segment spans residues 87–111; sequence LANVIRYFPTQALNFAFKDKYKQLF. ADP contacts are provided by arginine 92 and lysine 104. Residues 112-121 are Mitochondrial intermembrane-facing; the sequence is MSGVNKEKQF. The chain crosses the membrane as a helical span at residues 122–142; it reads WRWFLANLASGGAAGATSLCV. Solcar repeat units lie at residues 123–213 and 220–307; these read RWFL…VKGL and TPFL…IKEF. Topologically, residues 143 to 190 are mitochondrial matrix; the sequence is VYPLDFARTRLGVDIGKGPEERQFKGLGDCIMKIAKSDGIAGLYQGFG. The chain crosses the membrane as a helical span at residues 191–211; that stretch reads VSVQGIIVYRASYFGAYDTVK. Over 212 to 222 the chain is Mitochondrial intermembrane; that stretch reads GLLPKPKKTPF. The chain crosses the membrane as a helical span at residues 223 to 243; it reads LVSFFIAQVVTTCSGILSYPF. At 244–283 the chain is on the mitochondrial matrix side; the sequence is DTVRRRMMMQSGEAKRQYKGTLDCFVKIYQHEGISSFFRG. Position 247 (arginine 247) interacts with ADP. Residues 247 to 252 form an important for transport activity region; the sequence is RRRMMM. The short motif at 247 to 252 is the Nucleotide carrier signature motif element; the sequence is RRRMMM. The helical transmembrane segment at 284 to 301 threads the bilayer; it reads AFSNVLRGTGGALVLVLY. At 302-315 the chain is on the mitochondrial intermembrane side; that stretch reads DKIKEFFHIDIGGR.

The protein belongs to the mitochondrial carrier (TC 2.A.29) family. In terms of assembly, monomer. Expressed in brain, liver, sperm and testis. In testis, expressed at higher level in spermatocytes, while it is expressed at lower level in spermatogonial cells. Expressed in erythrocytes (at protein level).

The protein resides in the mitochondrion inner membrane. The protein localises to the membrane. It localises to the cell projection. Its subcellular location is the cilium. It is found in the flagellum membrane. The catalysed reaction is ADP(in) + ATP(out) = ADP(out) + ATP(in). It catalyses the reaction dATP(out) + ADP(in) = dATP(in) + ADP(out). It carries out the reaction dADP(in) + ADP(out) = dADP(out) + ADP(in). The enzyme catalyses H(+)(in) = H(+)(out). With respect to regulation, the matrix-open state (m-state) is inhibited by the membrane-permeable bongkrekic acid (BKA). The cytoplasmic-open state (c-state) is inhibited by the membrane-impermeable toxic inhibitor carboxyatractyloside (CATR). Proton transporter activity is inhibited by ADP:ATP antiporter activity. Functionally, ADP:ATP antiporter that mediates import of ADP into the mitochondrial matrix for ATP synthesis, and export of ATP out to fuel the cell. Cycles between the cytoplasmic-open state (c-state) and the matrix-open state (m-state): operates by the alternating access mechanism with a single substrate-binding site intermittently exposed to either the cytosolic (c-state) or matrix (m-state) side of the inner mitochondrial membrane. Specifically required during spermatogenesis, probably to mediate ADP:ATP exchange in spermatocytes. Large ATP supplies from mitochondria may be critical for normal progression of spermatogenesis during early stages of meiotic prophase I, including DNA double-strand break repair and chromosomal synapsis. In addition to its ADP:ATP antiporter activity, also involved in mitochondrial uncoupling and mitochondrial permeability transition pore (mPTP) activity. Plays a role in mitochondrial uncoupling by acting as a proton transporter: proton transport uncouples the proton flows via the electron transport chain and ATP synthase to reduce the efficiency of ATP production and cause mitochondrial thermogenesis. Proton transporter activity is inhibited by ADP:ATP antiporter activity, suggesting that SLC25A31/ANT4 acts as a master regulator of mitochondrial energy output by maintaining a delicate balance between ATP production (ADP:ATP antiporter activity) and thermogenesis (proton transporter activity). Proton transporter activity requires free fatty acids as cofactor, but does not transport it. Among nucleotides, may also exchange ADP for dATP and dADP. Also plays a key role in mPTP opening, a non-specific pore that enables free passage of the mitochondrial membranes to solutes of up to 1.5 kDa, and which contributes to cell death. It is however unclear if SLC25A31/ANT4 constitutes a pore-forming component of mPTP or regulates it. This is ADP/ATP translocase 4 from Homo sapiens (Human).